Reading from the N-terminus, the 377-residue chain is MEMPEEPANSGHSLPPVYIYSPEYVSICDSLVKVPKRASMVHSLIEAYALHKQMRIVKPKVASMEEMATFHTDAYLQHLQKVSQEGDEDHPDSIEYGLGYDCPATEGIFDYAAAIGGGTITAAQCLIDGKCKVAINWSGGWHHAKKDEASGFCYLNDAVLGILRLRRKFDRILYVDLDLHHGDGVEDAFSFTSKVMTVSLHKFSPGFFPGTGDMSDVGLGKGRYYSVNVPIQDGIQDEKYYHICESVLKEVYQAFNPKAVVLQLGADTIAGDPMCSFNMTPVGIGKCLKYVLQWQLATLILGGGGYNLANTARCWTYLTGVILGKTLSSEIPDHEFFTAYGPDYVLEITPSCRPDRNEPHRIQQILNYIKGNLKHVV.

The histone deacetylase stretch occupies residues 14–324 (LPPVYIYSPE…WTYLTGVILG (311 aa)). The residue at position 39 (Ser39) is a Phosphoserine. Asp101 contributes to the substrate binding site. Residue His143 is the Proton acceptor of the active site. A substrate-binding site is contributed by Gly151. A divalent metal cation contacts are provided by Asp178, His180, and Asp267. Tyr306 lines the substrate pocket.

It belongs to the histone deacetylase family. HD type 1 subfamily. As to quaternary structure, interacts with CBFA2T3. Interacts with phosphorylated SMG5/EST1B; this interaction protects SMG5 from ubiquitin-mediated degradation. Associates with alpha-SMA (smooth muscle alpha-actin). A divalent metal cation serves as cofactor. In terms of processing, phosphorylated by PKA on serine 39. Phosphorylation reduces deacetylase activity observed preferentially on histones H3 and H4.

It localises to the nucleus. The protein resides in the chromosome. Its subcellular location is the cytoplasm. The catalysed reaction is N(6)-acetyl-L-lysyl-[histone] + H2O = L-lysyl-[histone] + acetate. It carries out the reaction N(6)-acetyl-L-lysyl-[protein] + H2O = L-lysyl-[protein] + acetate. It catalyses the reaction N(6)-(2E)-butenoyl-L-lysyl-[protein] + H2O = (2E)-2-butenoate + L-lysyl-[protein]. Its activity is inhibited by trichostatin A (TSA) and butyrate, 2 well known histone deacetylase inhibitors. histone deacetylase inhibitor. Its function is as follows. Histone deacetylase that catalyzes the deacetylation of lysine residues on the N-terminal part of the core histones (H2A, H2B, H3 and H4). Histone deacetylation gives a tag for epigenetic repression and plays an important role in transcriptional regulation, cell cycle progression and developmental events. Histone deacetylases act via the formation of large multiprotein complexes. Also involved in the deacetylation of cohesin complex protein SMC3 regulating release of cohesin complexes from chromatin. May play a role in smooth muscle cell contractility. In addition to protein deacetylase activity, also has protein-lysine deacylase activity: acts as a protein decrotonylase by mediating decrotonylation ((2E)-butenoyl) of histones. The protein is Histone deacetylase 8 (Hdac8) of Mus musculus (Mouse).